The following is a 557-amino-acid chain: Urocanate hydratase (557 aa).

Residues 48-49 (GG), Q126, 178-180 (GMG), D198, R203, 244-245 (NA), 265-269 (QTSAH), 274-275 (YL), and Y323 each bind NAD(+). C411 is an active-site residue. Position 493 (G493) interacts with NAD(+).

It belongs to the urocanase family. NAD(+) serves as cofactor.

It is found in the cytoplasm. It catalyses the reaction 4-imidazolone-5-propanoate = trans-urocanate + H2O. It functions in the pathway amino-acid degradation; L-histidine degradation into L-glutamate; N-formimidoyl-L-glutamate from L-histidine: step 2/3. Functionally, catalyzes the conversion of urocanate to 4-imidazolone-5-propionate. The protein is Urocanate hydratase of Beutenbergia cavernae (strain ATCC BAA-8 / DSM 12333 / CCUG 43141 / JCM 11478 / NBRC 16432 / NCIMB 13614 / HKI 0122).